We begin with the raw amino-acid sequence, 96 residues long: Probable spanin, outer lipoprotein subunit (96 aa).

An N-terminal signal peptide occupies residues 1 to 24 (MRTKIFAAGTVLTCLMLCAGCTSA). Residues 25–96 (PPAPTPVIVP…QTRQPAQGAD (72 aa)) are Periplasmic-facing. The stretch at 54 to 78 (GDLSADIRQLENALARCASQVKMIK) forms a coiled coil.

In terms of assembly, interacts (via C-terminus) with the spanin inner membrane subunit (via C-terminus). Part of the spanin complex which spans the entire periplasmic space. The spanin complex is composed of spanin inner membrane subunit and spanin outer membrane subunit.

The protein localises to the host cell outer membrane. In terms of biological role, component of the spanin complex that disrupts the host outer membrane and participates in cell lysis during virus exit. The spanin complex conducts the final step in host lysis by disrupting the outer membrane after holin and endolysin action have permeabilized the inner membrane and degraded the host peptidoglycans. Host outer membrane disruption is possibly due to local fusion between the inner and outer membrane performed by the spanin complex. In Enterobacteriaceae (Bacteriophage P2), this protein is Probable spanin, outer lipoprotein subunit (lysC).